Reading from the N-terminus, the 297-residue chain is Endonuclease G, mitochondrial (297 aa).

The transit peptide at Met1 to Ala48 directs the protein to the mitochondrion. Residue Thr128 is modified to Phosphothreonine; by GSK3-beta. His141 acts as the Proton acceptor in catalysis. Asn172 is a binding site for Mg(2+). The interval Ala286–Ser296 is essential for deoxyribonuclease activity. Phosphoserine; by GSK3-beta is present on Ser288.

It belongs to the DNA/RNA non-specific endonuclease family. In terms of assembly, homodimer; disulfide-linked. Homodimerization is essential for enzyme activity. Interacts with YWHAG. Mg(2+) is required as a cofactor. Post-translationally, GSK3-beta-mediated dual phosphorylations at Thr-128 and Ser-288 is necessary for its interaction with YWHAG and the induction of autophagy.

It is found in the mitochondrion. In terms of biological role, endonuclease that preferentially catalyzes the cleavage of double-stranded 5-hydroxymethylcytosine (5hmC)-modified DNA. The 5hmC-modified nucleotide does not increase the binding affinity, but instead increases the efficiency of cutting and specifies the site of cleavage for the modified DNAs. Shows significantly higher affinity for four-stranded Holliday junction over duplex and single-stranded DNAs. Promotes conservative recombination when the DNA is 5hmC-modified. Promotes autophagy through the suppression of mTOR by its phosphorylation-mediated interaction with YWHAG and its endonuclease activity-mediated DNA damage response. GSK3-beta mediated phosphorylation of ENDOG enhances its interaction with YWHAG, leading to the release of TSC2 and PIK3C3 from YWHAG resulting in mTOR pathway suppression and autophagy initiation. Promotes cleavage of mtDNA in response to oxidative and nitrosative stress, in turn inducing compensatory mtDNA replication. This chain is Endonuclease G, mitochondrial (ENDOG), found in Homo sapiens (Human).